Consider the following 254-residue polypeptide: 3-deoxy-manno-octulosonate cytidylyltransferase (254 aa).

Belongs to the KdsB family.

It is found in the cytoplasm. It catalyses the reaction 3-deoxy-alpha-D-manno-oct-2-ulosonate + CTP = CMP-3-deoxy-beta-D-manno-octulosonate + diphosphate. Its pathway is nucleotide-sugar biosynthesis; CMP-3-deoxy-D-manno-octulosonate biosynthesis; CMP-3-deoxy-D-manno-octulosonate from 3-deoxy-D-manno-octulosonate and CTP: step 1/1. The protein operates within bacterial outer membrane biogenesis; lipopolysaccharide biosynthesis. In terms of biological role, activates KDO (a required 8-carbon sugar) for incorporation into bacterial lipopolysaccharide in Gram-negative bacteria. The polypeptide is 3-deoxy-manno-octulosonate cytidylyltransferase (Haemophilus influenzae (strain PittEE)).